The primary structure comprises 276 residues: Diaminopimelate epimerase (276 aa).

Substrate-binding residues include Asn-13, Gln-46, and Asn-66. The Proton donor role is filled by Cys-75. Substrate is bound by residues Gly-76–Asn-77, Asn-159, Asn-192, and Glu-210–Arg-211. Cys-219 (proton acceptor) is an active-site residue. Gly-220–Thr-221 is a substrate binding site.

The protein belongs to the diaminopimelate epimerase family. In terms of assembly, homodimer.

It is found in the cytoplasm. The enzyme catalyses (2S,6S)-2,6-diaminopimelate = meso-2,6-diaminopimelate. It participates in amino-acid biosynthesis; L-lysine biosynthesis via DAP pathway; DL-2,6-diaminopimelate from LL-2,6-diaminopimelate: step 1/1. In terms of biological role, catalyzes the stereoinversion of LL-2,6-diaminopimelate (L,L-DAP) to meso-diaminopimelate (meso-DAP), a precursor of L-lysine and an essential component of the bacterial peptidoglycan. In Ectopseudomonas mendocina (strain ymp) (Pseudomonas mendocina), this protein is Diaminopimelate epimerase.